Reading from the N-terminus, the 209-residue chain is C-type lectin domain family 6 member A (209 aa).

Residues 1–20 (MMQEQQPQSTEKRGWLSLRL) are Cytoplasmic-facing. A helical; Signal-anchor for type II membrane protein transmembrane segment spans residues 21–41 (WSVAGISIALLSACFIVSCVV). Residues 42–209 (TYHFTYGETG…SICEMNKIYL (168 aa)) lie on the Extracellular side of the membrane. 4 disulfides stabilise this stretch: C66/C78, C79/C90, C107/C202, and C176/C194. The C-type lectin domain maps to 86–203 (FGSSCYFISS…CETRRNSICE (118 aa)). V116, N118, and E122 together coordinate Ca(2+). N131 is a glycosylation site (N-linked (GlcNAc...) asparagine). E168, N170, and E174 together coordinate Ca(2+). Alpha-D-mannopyranose-binding positions include 168–170 (EPN), E174, W182, 190–191 (ND), and R198. An N-linked (GlcNAc...) asparagine glycan is attached at N170. Residues N190 and D191 each coordinate Ca(2+). E203 provides a ligand contact to Ca(2+).

Associated with FCER1G. Heterodimer with CLEC4D; this heterodimer forms a pattern recognition receptor (PRR) against fungal infection. In terms of tissue distribution, expressed in lung, spleen, lymph node, leukocytes, bone marrow, tonsils and dendritic cells. Strongly expressed in purified monocytes and weakly in B-cells. In peripheral blood cells, preferentially expressed in plasmacytoids rather than myeloids.

Its subcellular location is the cell membrane. Calcium-dependent lectin that acts as a pattern recognition receptor (PRR) of the innate immune system: specifically recognizes and binds alpha-mannans on C.albicans hypheas. Binding of C.albicans alpha-mannans to this receptor complex leads to phosphorylation of the immunoreceptor tyrosine-based activation motif (ITAM) of FCER1G, triggering activation of SYK, CARD9 and NF-kappa-B, consequently driving maturation of antigen-presenting cells and shaping antigen-specific priming of T-cells toward effector T-helper 1 and T-helper 17 cell subtypes. Recognizes also, in a mannose-dependent manner, allergens from house dust mite and fungi, by promoting cysteinyl leukotriene production. Recognizes soluble elements from the eggs of Shistosoma mansoni altering adaptive immune responses. The polypeptide is C-type lectin domain family 6 member A (Homo sapiens (Human)).